A 411-amino-acid polypeptide reads, in one-letter code: Serpin A12 (411 aa).

Residues 1 to 20 form the signal peptide; the sequence is MNLVLGLGLFLAGLLTVKGL. N-linked (GlcNAc...) asparagine glycans are attached at residues asparagine 92 and asparagine 267. Positions 364 to 382 are reactive center loop; that stretch reads GTEGAAGSGAQTLPMETPR.

It belongs to the serpin family. As to quaternary structure, forms a stable complex with KLK7. Post-translationally, glycosylation slightly decreases affinity for heparin, but otherwise has no significant effect on KLK7 inhibitory activity or thermal stability of the protein. In terms of tissue distribution, expressed in visceral adipose tissues.

The protein resides in the secreted. Its activity is regulated as follows. Inhibition of KLK7 is enhanced by heparin. Functionally, adipokine that modulates insulin action by specifically inhibiting its target protease KLK7 in white adipose tissues. This chain is Serpin A12 (Serpina12), found in Rattus norvegicus (Rat).